We begin with the raw amino-acid sequence, 206 residues long: uncharacterized protein (206 aa).

Helical transmembrane passes span 9 to 29, 47 to 67, 74 to 94, and 150 to 170; these read ILSL…SVLT, LGVV…LAFL, FFVI…INTI, and IAVI…FYAF.

This sequence belongs to the Rht family.

The protein resides in the cell membrane. This is an uncharacterized protein from Synechocystis sp. (strain ATCC 27184 / PCC 6803 / Kazusa).